The chain runs to 486 residues: Ribosomal RNA small subunit methyltransferase F (486 aa).

Residues 124–130, Glu148, Asp175, and Asp193 contribute to the S-adenosyl-L-methionine site; that span reads ASAPGSK. Cys246 functions as the Nucleophile in the catalytic mechanism.

The protein belongs to the class I-like SAM-binding methyltransferase superfamily. RsmB/NOP family.

It is found in the cytoplasm. The enzyme catalyses cytidine(1407) in 16S rRNA + S-adenosyl-L-methionine = 5-methylcytidine(1407) in 16S rRNA + S-adenosyl-L-homocysteine + H(+). Functionally, specifically methylates the cytosine at position 1407 (m5C1407) of 16S rRNA. The protein is Ribosomal RNA small subunit methyltransferase F of Shewanella baltica (strain OS223).